Here is a 92-residue protein sequence, read N- to C-terminus: UPF0250 protein XOO3732 (92 aa).

This sequence belongs to the UPF0250 family.

In Xanthomonas oryzae pv. oryzae (strain MAFF 311018), this protein is UPF0250 protein XOO3732.